Consider the following 498-residue polypeptide: Glycerol kinase (498 aa).

Thr-12 serves as a coordination point for ADP. Residues Thr-12, Thr-13, and Ser-14 each contribute to the ATP site. Position 12 (Thr-12) interacts with sn-glycerol 3-phosphate. Residue Arg-16 participates in ADP binding. Sn-glycerol 3-phosphate contacts are provided by Arg-82, Glu-83, Tyr-134, and Asp-243. Glycerol contacts are provided by Arg-82, Glu-83, Tyr-134, Asp-243, and Gln-244. Residues Thr-265 and Gly-308 each coordinate ADP. Residues Thr-265, Gly-308, Gln-312, and Gly-409 each contribute to the ATP site. Gly-409 and Asn-413 together coordinate ADP.

Belongs to the FGGY kinase family. Homotetramer and homodimer (in equilibrium).

The catalysed reaction is glycerol + ATP = sn-glycerol 3-phosphate + ADP + H(+). The protein operates within polyol metabolism; glycerol degradation via glycerol kinase pathway; sn-glycerol 3-phosphate from glycerol: step 1/1. Its activity is regulated as follows. Activated by phosphorylation and inhibited by fructose 1,6-bisphosphate (FBP). Its function is as follows. Key enzyme in the regulation of glycerol uptake and metabolism. Catalyzes the phosphorylation of glycerol to yield sn-glycerol 3-phosphate. In Clostridium botulinum (strain Loch Maree / Type A3), this protein is Glycerol kinase.